Reading from the N-terminus, the 1114-residue chain is Extracellular sulfatase SULF-1 homolog (1114 aa).

An N-terminal signal peptide occupies residues Met1–Ser25. Asp62, Asp63, and Cys98 together coordinate Ca(2+). The Nucleophile role is filled by Cys98. Cys98 carries the post-translational modification 3-oxoalanine (Cys). N-linked (GlcNAc...) asparagine glycosylation is found at Asn122, Asn159, Asn181, Asn208, and Asn251. Ca(2+) contacts are provided by Asp327 and His328. Asn447 carries N-linked (GlcNAc...) asparagine glycosylation. Over residues Ser466–Ala479 the composition is skewed to low complexity. Positions Ser466–Met504 are disordered. Positions Glu483–Gly502 are enriched in acidic residues. N-linked (GlcNAc...) asparagine glycosylation is found at Asn683, Asn713, and Asn743. The segment at Lys781–Ala812 is disordered. Basic and acidic residues predominate over residues Arg795–Asp804. An N-linked (GlcNAc...) asparagine glycan is attached at Asn817. The span at Ala876–Arg895 shows a compositional bias: basic and acidic residues. Residues Ala876–Arg901 are disordered. 3 N-linked (GlcNAc...) asparagine glycosylation sites follow: Asn945, Asn955, and Asn974. Residues Leu1073–Ala1114 are disordered. Positions Thr1095–Ala1114 are enriched in polar residues.

The protein belongs to the sulfatase family. The cofactor is Ca(2+). In terms of processing, the conversion to 3-oxoalanine (also known as C-formylglycine, FGly), of a serine or cysteine residue in prokaryotes and of a cysteine residue in eukaryotes, is critical for catalytic activity.

The protein resides in the endoplasmic reticulum. It is found in the golgi apparatus. Its subcellular location is the golgi stack. It localises to the cell surface. This chain is Extracellular sulfatase SULF-1 homolog (Sulf1), found in Drosophila melanogaster (Fruit fly).